The sequence spans 313 residues: Probable myosin light chain kinase DDB_G0292624 (313 aa).

One can recognise a Protein kinase domain in the interval 6-264 (YELHKEIGKG…AKQALEHPWI (259 aa)). Residues 12 to 20 (IGKGAFSVV) and Lys35 each bind ATP. Asp125 (proton acceptor) is an active-site residue.

It belongs to the protein kinase superfamily. CAMK Ser/Thr protein kinase family. CaMK subfamily.

The enzyme catalyses L-seryl-[myosin light chain] + ATP = O-phospho-L-seryl-[myosin light chain] + ADP + H(+). It catalyses the reaction L-threonyl-[myosin light chain] + ATP = O-phospho-L-threonyl-[myosin light chain] + ADP + H(+). Does not have a calmodulin-binding domain. May phosphorylate a specific serine in the N-terminus of a myosin light chain. This chain is Probable myosin light chain kinase DDB_G0292624, found in Dictyostelium discoideum (Social amoeba).